The following is a 191-amino-acid chain: Insulin-like peptide INSL6 (191 aa).

The N-terminal stretch at M1–E22 is a signal peptide. 3 disulfide bridges follow: C33–C172, C45–C185, and C171–C176. Residues F53 to Q161 constitute a propeptide, connecting peptide.

It belongs to the insulin family.

Its subcellular location is the secreted. May have a role in sperm development and fertilization. In Mus musculus (Mouse), this protein is Insulin-like peptide INSL6 (Insl6).